Here is a 236-residue protein sequence, read N- to C-terminus: Protein EVI2A (236 aa).

The N-terminal stretch at 1-30 (MPTDMEHTGHYLHLAFLMTTVFSLSPGTKA) is a signal peptide. N-linked (GlcNAc...) asparagine glycans are attached at residues asparagine 31, asparagine 38, asparagine 49, asparagine 73, and asparagine 112. Residues 31-133 (NYTRLWANST…DVCAENNNNM (103 aa)) lie on the Extracellular side of the membrane. Residues 134 to 154 (AMLICLIIIAVLFLICTFLFL) traverse the membrane as a helical segment. Residues 155–236 (STVVLANKVS…TEKLTNKQIG (82 aa)) are Cytoplasmic-facing. Phosphoserine is present on serine 211. A disordered region spans residues 217–236 (ATRERKDEEGTEKLTNKQIG). Over residues 218–236 (TRERKDEEGTEKLTNKQIG) the composition is skewed to basic and acidic residues.

This sequence belongs to the EVI2A family.

It is found in the membrane. Its function is as follows. May complex with itself or/and other proteins within the membrane, to function as part of a cell-surface receptor. The chain is Protein EVI2A (EVI2A) from Homo sapiens (Human).